Reading from the N-terminus, the 299-residue chain is dTDP-4-dehydrorhamnose reductase (299 aa).

NADH is bound by residues 10-12 (GQV), aspartate 30, 39-40 (DF), and 63-65 (AHT). NADPH is bound at residue 11–12 (QV). NADPH contacts are provided by residues 39 to 40 (DF), 63 to 65 (AHT), and tyrosine 102. 104–105 (TD) lines the dTDP-beta-L-rhamnose pocket. NADH is bound by residues tyrosine 128 and lysine 132. NADPH contacts are provided by tyrosine 128 and lysine 132. Residue tyrosine 128 is the Proton donor/acceptor of the active site. Residue tryptophan 153 participates in dTDP-beta-L-rhamnose binding.

It belongs to the dTDP-4-dehydrorhamnose reductase family. Homodimer. Requires Mg(2+) as cofactor.

It carries out the reaction dTDP-beta-L-rhamnose + NADP(+) = dTDP-4-dehydro-beta-L-rhamnose + NADPH + H(+). It functions in the pathway carbohydrate biosynthesis; dTDP-L-rhamnose biosynthesis. The protein operates within bacterial outer membrane biogenesis; LPS O-antigen biosynthesis. Involved in the biosynthesis of the dTDP-L-rhamnose which is an important component of lipopolysaccharide (LPS). Catalyzes the reduction of dTDP-6-deoxy-L-lyxo-4-hexulose to yield dTDP-L-rhamnose. RmlD uses NADH and NADPH nearly equally well. This Salmonella typhimurium (strain LT2 / SGSC1412 / ATCC 700720) protein is dTDP-4-dehydrorhamnose reductase (rfbD).